The following is a 285-amino-acid chain: Hsp90 co-chaperone Cdc37-like 1 (285 aa).

The interval 34 to 54 is disordered; it reads LHNSESMDQEQAMAQAELSEL. A coiled-coil region spans residues 35 to 73; sequence HNSESMDQEQAMAQAELSELQRSEEEWRRKEAALSQGEN.

It belongs to the CDC37 family. In terms of assembly, forms complexes with Hsp70 and Hsp90.

It localises to the cytoplasm. Its function is as follows. Co-chaperone that binds to numerous proteins and promotes their interaction with Hsp70 and Hsp90. The chain is Hsp90 co-chaperone Cdc37-like 1 (cdc37l1) from Xenopus tropicalis (Western clawed frog).